Here is a 270-residue protein sequence, read N- to C-terminus: Phosphatidylglycerol--prolipoprotein diacylglyceryl transferase (270 aa).

A run of 4 helical transmembrane segments spans residues Phe-19–Ala-39, Leu-56–Glu-76, Gln-92–Ala-112, and Gly-116–Ile-136. Residue Arg-138 coordinates a 1,2-diacyl-sn-glycero-3-phospho-(1'-sn-glycerol). The next 3 membrane-spanning stretches (helical) occupy residues His-178–Leu-198, Gly-206–Leu-226, and Leu-236–Val-256.

Belongs to the Lgt family.

It is found in the cell membrane. The enzyme catalyses L-cysteinyl-[prolipoprotein] + a 1,2-diacyl-sn-glycero-3-phospho-(1'-sn-glycerol) = an S-1,2-diacyl-sn-glyceryl-L-cysteinyl-[prolipoprotein] + sn-glycerol 1-phosphate + H(+). It functions in the pathway protein modification; lipoprotein biosynthesis (diacylglyceryl transfer). Its function is as follows. Catalyzes the transfer of the diacylglyceryl group from phosphatidylglycerol to the sulfhydryl group of the N-terminal cysteine of a prolipoprotein, the first step in the formation of mature lipoproteins. The chain is Phosphatidylglycerol--prolipoprotein diacylglyceryl transferase from Bacillus anthracis (strain A0248).